A 214-amino-acid chain; its full sequence is Large ribosomal subunit protein uL3 (214 aa).

An N5-methylglutamine modification is found at Gln-151.

The protein belongs to the universal ribosomal protein uL3 family. In terms of assembly, part of the 50S ribosomal subunit. Forms a cluster with proteins L14 and L19. In terms of processing, methylated by PrmB.

Functionally, one of the primary rRNA binding proteins, it binds directly near the 3'-end of the 23S rRNA, where it nucleates assembly of the 50S subunit. The polypeptide is Large ribosomal subunit protein uL3 (Saccharophagus degradans (strain 2-40 / ATCC 43961 / DSM 17024)).